Here is a 205-residue protein sequence, read N- to C-terminus: Urease accessory protein UreG (205 aa).

14–21 (GPVGSGKT) is a GTP binding site.

The protein belongs to the SIMIBI class G3E GTPase family. UreG subfamily. As to quaternary structure, homodimer. UreD, UreF and UreG form a complex that acts as a GTP-hydrolysis-dependent molecular chaperone, activating the urease apoprotein by helping to assemble the nickel containing metallocenter of UreC. The UreE protein probably delivers the nickel.

The protein resides in the cytoplasm. Its function is as follows. Facilitates the functional incorporation of the urease nickel metallocenter. This process requires GTP hydrolysis, probably effectuated by UreG. The polypeptide is Urease accessory protein UreG (Citrobacter koseri (strain ATCC BAA-895 / CDC 4225-83 / SGSC4696)).